A 102-amino-acid polypeptide reads, in one-letter code: Citrate lyase acyl carrier protein (102 aa).

An O-(phosphoribosyl dephospho-coenzyme A)serine modification is found at S14.

The protein belongs to the CitD family. Oligomer with a subunit composition of (alpha,beta,gamma)6.

The protein resides in the cytoplasm. Its function is as follows. Covalent carrier of the coenzyme of citrate lyase. This is Citrate lyase acyl carrier protein from Streptococcus equi subsp. equi (strain 4047).